We begin with the raw amino-acid sequence, 119 residues long: Microtubule nucleation factor SSNA1 (119 aa).

Residue T2 is modified to N-acetylthreonine. Residues T2 to Q32 form an important for localization to the centrosome region. Residues N13–E70 are a coiled coil.

The protein belongs to the SSNA1 family. As to quaternary structure, self-associates to form fibrils. Also forms dimers as well as monomers. Interacts with SPAST. As to expression, widely expressed.

It localises to the nucleus. It is found in the cytoplasm. Its subcellular location is the cytoskeleton. The protein resides in the microtubule organizing center. The protein localises to the centrosome. It localises to the centriole. It is found in the midbody. Its subcellular location is the flagellum basal body. The protein resides in the flagellum axoneme. The protein localises to the cell projection. It localises to the axon. Functionally, microtubule-binding protein which stabilizes dynamic microtubules by slowing growth and shrinkage at both plus and minus ends and serves as a sensor of microtubule damage, protecting microtubules from the microtubule-severing enzyme SPAST. Induces microtubule branching which is mediated by the formation of long SSNA1 fibrils which guide microtubule protofilaments to split apart from the mother microtubule and form daughter microtubules. Plays a role in axon outgrowth and branching. Required for cell division. In Homo sapiens (Human), this protein is Microtubule nucleation factor SSNA1.